A 585-amino-acid polypeptide reads, in one-letter code: Arginine--tRNA ligase (585 aa).

A 'HIGH' region motif is present at residues 127–137; that stretch reads PNTNKPLHVGH.

Belongs to the class-I aminoacyl-tRNA synthetase family. In terms of assembly, monomer.

It is found in the cytoplasm. The enzyme catalyses tRNA(Arg) + L-arginine + ATP = L-arginyl-tRNA(Arg) + AMP + diphosphate. The sequence is that of Arginine--tRNA ligase (argS) from Borreliella burgdorferi (strain ATCC 35210 / DSM 4680 / CIP 102532 / B31) (Borrelia burgdorferi).